Here is a 409-residue protein sequence, read N- to C-terminus: Divalent metal cation transporter MntH (409 aa).

The next 11 helical transmembrane spans lie at 19–39 (LSLM…GNFA), 46–66 (ATFG…AMLV), 98–118 (WVQA…GAAI), 122–142 (LLFG…TFLI), 155–175 (LVIG…LIFS), 196–216 (AVFL…IYLH), 241–261 (IAMT…AAAF), 290–310 (VFGL…TLAG), 320–340 (FYIP…IVIL), 348–368 (ILVM…VPLL), and 388–408 (ILGK…LISL).

It belongs to the NRAMP family.

It is found in the cell inner membrane. Its function is as follows. H(+)-stimulated, divalent metal cation uptake system. This is Divalent metal cation transporter MntH from Yersinia pseudotuberculosis serotype O:1b (strain IP 31758).